Consider the following 254-residue polypeptide: Ribonuclease HII (254 aa).

The RNase H type-2 domain maps to 67–254 (IVIAGVDEVG…HRMSFLKNII (188 aa)). D73, E74, and D170 together coordinate a divalent metal cation.

The protein belongs to the RNase HII family. It depends on Mn(2+) as a cofactor. Requires Mg(2+) as cofactor.

The protein resides in the cytoplasm. The catalysed reaction is Endonucleolytic cleavage to 5'-phosphomonoester.. In terms of biological role, endonuclease that specifically degrades the RNA of RNA-DNA hybrids. The chain is Ribonuclease HII from Clostridium acetobutylicum (strain ATCC 824 / DSM 792 / JCM 1419 / IAM 19013 / LMG 5710 / NBRC 13948 / NRRL B-527 / VKM B-1787 / 2291 / W).